The sequence spans 397 residues: Protein Rep52 (397 aa).

The region spanning 84-239 (DPQYAASVFL…LDHDFGKVTK (156 aa)) is the SF3 helicase domain. 110–117 (GPATTGKT) contacts ATP. Residues 265-296 (GGAKKRPAPSDADISEPKRVRESVAQPSTSDA) are disordered.

Homooligomer. Interacts with host PRKX.

It localises to the host nucleus. Its function is as follows. Plays a critical role during packaging of viral DNA into empty capsids, where they are thought to be part of the packaging motor complex. The single stranded genomic DNA is packaged in a 3' to 5' direction and requires the association between viral DNA and Rep40. Regulates host PKA activity by interacting with host PRKX as a mechanism to interfere with helper virus propagation and to promote its own replication. This chain is Protein Rep52 (Rep52), found in Mammalia (AAV-2).